The sequence spans 306 residues: Small ribosomal subunit biogenesis GTPase RsgA (306 aa).

A CP-type G domain is found at 77-236; that stretch reads KNELKRPNVA…IVDTPGFSKL (160 aa). GTP-binding positions include 126-129 and 179-187; these read SKID and GQTGVGKST. 4 residues coordinate Zn(2+): Cys260, Cys266, His268, and Cys274.

Belongs to the TRAFAC class YlqF/YawG GTPase family. RsgA subfamily. Monomer. Associates with 30S ribosomal subunit, binds 16S rRNA. Requires Zn(2+) as cofactor.

The protein localises to the cytoplasm. One of several proteins that assist in the late maturation steps of the functional core of the 30S ribosomal subunit. Helps release RbfA from mature subunits. May play a role in the assembly of ribosomal proteins into the subunit. Circularly permuted GTPase that catalyzes slow GTP hydrolysis, GTPase activity is stimulated by the 30S ribosomal subunit. This is Small ribosomal subunit biogenesis GTPase RsgA from Onion yellows phytoplasma (strain OY-M).